A 230-amino-acid chain; its full sequence is Mediator of RNA polymerase II transcription subunit 7 (230 aa).

Disordered regions lie at residues 1-22 (MSREESVSGANDVSSLYPPPPP) and 206-230 (QSQSQSQSQSQSQSQSQSQLQSDSQ).

Belongs to the Mediator complex subunit 7 family. Component of the Mediator complex.

The protein resides in the nucleus. Component of the Mediator complex, a coactivator involved in the regulated transcription of nearly all RNA polymerase II-dependent genes. Mediator functions as a bridge to convey information from gene-specific regulatory proteins to the basal RNA polymerase II transcription machinery. Mediator is recruited to promoters by direct interactions with regulatory proteins and serves as a scaffold for the assembly of a functional preinitiation complex with RNA polymerase II and the general transcription factors. The sequence is that of Mediator of RNA polymerase II transcription subunit 7 (MED7) from Candida glabrata (strain ATCC 2001 / BCRC 20586 / JCM 3761 / NBRC 0622 / NRRL Y-65 / CBS 138) (Yeast).